Reading from the N-terminus, the 102-residue chain is Cytochrome c oxidase subunit 6a, mitochondrial (102 aa).

A mitochondrion-targeting transit peptide spans Met-1–Asp-36.

This sequence belongs to the cytochrome c oxidase subunit 6A (TC 3.D.4.11) family.

It is found in the mitochondrion inner membrane. Functionally, this protein is one of the nuclear-coded polypeptide chains of cytochrome c oxidase, the terminal oxidase in mitochondrial electron transport. The sequence is that of Cytochrome c oxidase subunit 6a, mitochondrial (COX6A) from Arabidopsis thaliana (Mouse-ear cress).